The following is a 176-amino-acid chain: Ribosome maturation factor RimM (176 aa).

The 70-residue stretch at 101 to 170 folds into the PRC barrel domain; that stretch reads EGEYFESDLI…RITVELPEGL (70 aa).

The protein belongs to the RimM family. As to quaternary structure, binds ribosomal protein uS19.

The protein resides in the cytoplasm. In terms of biological role, an accessory protein needed during the final step in the assembly of 30S ribosomal subunit, possibly for assembly of the head region. Essential for efficient processing of 16S rRNA. May be needed both before and after RbfA during the maturation of 16S rRNA. It has affinity for free ribosomal 30S subunits but not for 70S ribosomes. The polypeptide is Ribosome maturation factor RimM (Solibacter usitatus (strain Ellin6076)).